The following is a 698-amino-acid chain: Polyribonucleotide nucleotidyltransferase (698 aa).

D490 and D496 together coordinate Mg(2+). One can recognise a KH domain in the interval 558-617; the sequence is PVIYTMRIPQDKIGALIGPGGKNIKRITETTDTKIDINDDGVVQIAAVNGDKLAMAKAEI. The S1 motif domain maps to 627–695; sequence NKIYKGKVVS…NNGKVRLSRK (69 aa).

It belongs to the polyribonucleotide nucleotidyltransferase family. The cofactor is Mg(2+).

The protein resides in the cytoplasm. The enzyme catalyses RNA(n+1) + phosphate = RNA(n) + a ribonucleoside 5'-diphosphate. In terms of biological role, involved in mRNA degradation. Catalyzes the phosphorolysis of single-stranded polyribonucleotides processively in the 3'- to 5'-direction. The chain is Polyribonucleotide nucleotidyltransferase from Elusimicrobium minutum (strain Pei191).